Reading from the N-terminus, the 146-residue chain is Large ribosomal subunit protein uL15 (146 aa).

The tract at residues 18–45 (VLGRGLGCGKGKTSGRGHKGQKARSGCA) is disordered. The segment covering 30–39 (TSGRGHKGQK) has biased composition (basic residues).

This sequence belongs to the universal ribosomal protein uL15 family. In terms of assembly, part of the 50S ribosomal subunit.

Functionally, binds to the 23S rRNA. This is Large ribosomal subunit protein uL15 from Anaplasma marginale (strain St. Maries).